A 192-amino-acid chain; its full sequence is GTP-binding protein RHO2 (192 aa).

14–21 contributes to the GTP binding site; the sequence is GDGACGKT. Residues 36 to 44 carry the Effector region motif; it reads YHPTVFENY. GTP contacts are provided by residues 61–65 and 119–122; these read DTAGQ and LKKD. Cys188 is lipidated: S-palmitoyl cysteine. Cys189 is modified (cysteine methyl ester). Cys189 carries the S-geranylgeranyl cysteine lipid modification. Positions 190–192 are cleaved as a propeptide — removed in mature form; it reads IIL.

This sequence belongs to the small GTPase superfamily. Rho family. As to quaternary structure, interacts with BEM4.

It is found in the cell membrane. The catalysed reaction is GTP + H2O = GDP + phosphate + H(+). The chain is GTP-binding protein RHO2 (RHO2) from Saccharomyces cerevisiae (strain ATCC 204508 / S288c) (Baker's yeast).